The sequence spans 81 residues: Mipartoxin-2 (81 aa).

Positions 1-21 (MKTLLLTLVVVTIVCLDLGNS) are cleaved as a signal peptide. Intrachain disulfides connect Cys24/Cys42, Cys35/Cys61, Cys65/Cys73, and Cys74/Cys79.

It belongs to the three-finger toxin family. Short-chain subfamily. In terms of tissue distribution, expressed by the venom gland.

The protein localises to the secreted. Snake venom neurotoxin that blocks neuromuscular transmission, presenting a postsynaptic action through the nicotinic acetylcholine receptor (nAChR). Has no cytotoxic activity. The sequence is that of Mipartoxin-2 from Micrurus mipartitus (Red-tailed coral snake).